The sequence spans 223 residues: Phosphoribosylformylglycinamidine synthase subunit PurQ (223 aa).

In terms of domain architecture, Glutamine amidotransferase type-1 spans 4-223 (KIGVITFPGT…FLSAIGTIAA (220 aa)). Cysteine 87 functions as the Nucleophile in the catalytic mechanism. Active-site residues include histidine 195 and glutamate 197.

In terms of assembly, part of the FGAM synthase complex composed of 1 PurL, 1 PurQ and 2 PurS subunits.

The protein resides in the cytoplasm. The catalysed reaction is N(2)-formyl-N(1)-(5-phospho-beta-D-ribosyl)glycinamide + L-glutamine + ATP + H2O = 2-formamido-N(1)-(5-O-phospho-beta-D-ribosyl)acetamidine + L-glutamate + ADP + phosphate + H(+). The enzyme catalyses L-glutamine + H2O = L-glutamate + NH4(+). It functions in the pathway purine metabolism; IMP biosynthesis via de novo pathway; 5-amino-1-(5-phospho-D-ribosyl)imidazole from N(2)-formyl-N(1)-(5-phospho-D-ribosyl)glycinamide: step 1/2. In terms of biological role, part of the phosphoribosylformylglycinamidine synthase complex involved in the purines biosynthetic pathway. Catalyzes the ATP-dependent conversion of formylglycinamide ribonucleotide (FGAR) and glutamine to yield formylglycinamidine ribonucleotide (FGAM) and glutamate. The FGAM synthase complex is composed of three subunits. PurQ produces an ammonia molecule by converting glutamine to glutamate. PurL transfers the ammonia molecule to FGAR to form FGAM in an ATP-dependent manner. PurS interacts with PurQ and PurL and is thought to assist in the transfer of the ammonia molecule from PurQ to PurL. The polypeptide is Phosphoribosylformylglycinamidine synthase subunit PurQ (Corynebacterium efficiens (strain DSM 44549 / YS-314 / AJ 12310 / JCM 11189 / NBRC 100395)).